A 400-amino-acid polypeptide reads, in one-letter code: Acetylornithine aminotransferase (400 aa).

Pyridoxal 5'-phosphate is bound by residues 102 to 103 (GA) and F135. N(2)-acetyl-L-ornithine is bound at residue R138. Pyridoxal 5'-phosphate is bound at residue 220-223 (DEVQ). K249 is modified (N6-(pyridoxal phosphate)lysine). S276 is a binding site for N(2)-acetyl-L-ornithine. T277 is a pyridoxal 5'-phosphate binding site.

The protein belongs to the class-III pyridoxal-phosphate-dependent aminotransferase family. ArgD subfamily. In terms of assembly, homodimer. It depends on pyridoxal 5'-phosphate as a cofactor.

It localises to the cytoplasm. The catalysed reaction is N(2)-acetyl-L-ornithine + 2-oxoglutarate = N-acetyl-L-glutamate 5-semialdehyde + L-glutamate. Its pathway is amino-acid biosynthesis; L-arginine biosynthesis; N(2)-acetyl-L-ornithine from L-glutamate: step 4/4. The polypeptide is Acetylornithine aminotransferase (Gloeobacter violaceus (strain ATCC 29082 / PCC 7421)).